A 430-amino-acid polypeptide reads, in one-letter code: ATP-dependent RNA helicase RhlB (430 aa).

The Q motif motif lies at 9–37 (QKFSDFALHPQVIEALESKGFHNCTPIQA). The 180-residue stretch at 40 to 219 (LPLALSGRDV…FEQMNNAEYV (180 aa)) folds into the Helicase ATP-binding domain. 53 to 60 (AQTGTGKT) is a binding site for ATP. Positions 165–168 (DEAD) match the DEAD box motif. Positions 245–390 (RLLQTLLEEE…VSKYNSDALM (146 aa)) constitute a Helicase C-terminal domain. Residues 392–430 (DLPAPKRLTRPPRSNNGPRRHNNAPRRSGAPRNNRKRAD) form a disordered region.

Belongs to the DEAD box helicase family. RhlB subfamily. As to quaternary structure, component of the RNA degradosome, which is a multiprotein complex involved in RNA processing and mRNA degradation.

The protein resides in the cytoplasm. It catalyses the reaction ATP + H2O = ADP + phosphate + H(+). In terms of biological role, DEAD-box RNA helicase involved in RNA degradation. Has RNA-dependent ATPase activity and unwinds double-stranded RNA. This chain is ATP-dependent RNA helicase RhlB, found in Pectobacterium carotovorum subsp. carotovorum (strain PC1).